Here is a 249-residue protein sequence, read N- to C-terminus: NAD kinase (249 aa).

Aspartate 45 functions as the Proton acceptor in the catalytic mechanism. NAD(+) contacts are provided by residues 45–46 (DG), arginine 50, 110–111 (NE), aspartate 138, and 149–154 (SGWGMS).

It belongs to the NAD kinase family. Requires a divalent metal cation as cofactor.

The protein resides in the cytoplasm. The catalysed reaction is NAD(+) + ATP = ADP + NADP(+) + H(+). Functionally, involved in the regulation of the intracellular balance of NAD and NADP, and is a key enzyme in the biosynthesis of NADP. Catalyzes specifically the phosphorylation on 2'-hydroxyl of the adenosine moiety of NAD to yield NADP. The sequence is that of NAD kinase from Saccharolobus solfataricus (strain ATCC 35092 / DSM 1617 / JCM 11322 / P2) (Sulfolobus solfataricus).